The following is a 681-amino-acid chain: DNA-directed RNA polymerase subunit beta' (681 aa).

Zn(2+) is bound by residues cysteine 69, cysteine 71, cysteine 87, and cysteine 90. Residues aspartate 489, aspartate 491, and aspartate 493 each contribute to the Mg(2+) site.

The protein belongs to the RNA polymerase beta' chain family. RpoC1 subfamily. In terms of assembly, in plastids the minimal PEP RNA polymerase catalytic core is composed of four subunits: alpha, beta, beta', and beta''. When a (nuclear-encoded) sigma factor is associated with the core the holoenzyme is formed, which can initiate transcription. Mg(2+) is required as a cofactor. It depends on Zn(2+) as a cofactor.

The protein localises to the plastid. It localises to the chloroplast. It carries out the reaction RNA(n) + a ribonucleoside 5'-triphosphate = RNA(n+1) + diphosphate. In terms of biological role, DNA-dependent RNA polymerase catalyzes the transcription of DNA into RNA using the four ribonucleoside triphosphates as substrates. This Nicotiana tomentosiformis (Tobacco) protein is DNA-directed RNA polymerase subunit beta'.